Here is a 3790-residue protein sequence, read N- to C-terminus: Transcription-associated protein 1 (3790 aa).

HEAT repeat units lie at residues R98–P136, T335–Q381, D740–L778, A1185–K1223, I1332–L1370, and A1826–L1864. The region spanning L2610–T3173 is the FAT domain. Residues M3429 to N3753 form the PI3K/PI4K catalytic domain. Residues V3435–A3441 form a G-loop region. A catalytic loop region spans residues N3616–M3624. Positions I3636–T3661 are activation loop. An FATC domain is found at F3758 to L3790.

The protein belongs to the PI3/PI4-kinase family. TRA1 subfamily. In terms of assembly, component of the Tip60 chromatin-remodeling complex which contains the catalytic subunit Tip60 and the subunits Domino, Tra1, Brd8, E(Pc), DMAP1, Pontin, Reptin, Ing3, Act87E, BAP55, Mrg15, MrgBP, Gas41 and YL-1. Probable component of some SAGA complex. Interacts with Spt3, Gcn5, Ada3 and Ada2b. As to expression, ubiquitous.

It is found in the nucleus. The protein resides in the cytoplasm. Its subcellular location is the chromosome. Part of the Tip60 chromatin-remodeling complex which is involved in DNA repair. Upon induction of DNA double-strand breaks, this complex acetylates phosphorylated H2AV in nucleosomes and exchanges it with unmodified H2AV. During wing development, required for activity of Notch and its coactivator mam. Function in promoting mam function is likely to involve both the Tip60 and SAGA complexes. The protein is Transcription-associated protein 1 (Nipped-A) of Drosophila melanogaster (Fruit fly).